A 226-amino-acid chain; its full sequence is uncharacterized protein (226 aa).

The 92-residue stretch at 1 to 92 folds into the HTH arsR-type domain; sequence MNPNIAKISS…QLLHIAPKAK (92 aa). Residues 32–55 constitute a DNA-binding region (H-T-H motif); sequence AGELAYLANIKPQTASFHLNKLLE.

This is an uncharacterized protein from Bacillus subtilis (strain 168).